The primary structure comprises 87 residues: U3-theraphotoxin-Hhn1q (87 aa).

An N-terminal signal peptide occupies residues 1-24 (MVNMKASMFLTFAGLVLLFVVCYA). The propeptide occupies 25 to 52 (SESEEKEFPKEMLSSIFAVDNDFKQEER). 3 cysteine pairs are disulfide-bonded: cysteine 54-cysteine 67, cysteine 61-cysteine 72, and cysteine 66-cysteine 79.

It belongs to the neurotoxin 10 (Hwtx-1) family. 51 (Hntx-8) subfamily. Hntx-8 sub-subfamily. As to expression, expressed by the venom gland.

It is found in the secreted. Ion channel inhibitor. The chain is U3-theraphotoxin-Hhn1q from Cyriopagopus hainanus (Chinese bird spider).